The sequence spans 163 residues: NADH-quinone oxidoreductase subunit I (163 aa).

2 4Fe-4S ferredoxin-type domains span residues 55 to 84 (RRYP…IDAE) and 94 to 123 (TRYD…EGPN). Cys-64, Cys-67, Cys-70, Cys-74, Cys-103, Cys-106, Cys-109, and Cys-113 together coordinate [4Fe-4S] cluster.

It belongs to the complex I 23 kDa subunit family. In terms of assembly, NDH-1 is composed of 14 different subunits. Subunits NuoA, H, J, K, L, M, N constitute the membrane sector of the complex. Requires [4Fe-4S] cluster as cofactor.

The protein localises to the cell inner membrane. It catalyses the reaction a quinone + NADH + 5 H(+)(in) = a quinol + NAD(+) + 4 H(+)(out). Its function is as follows. NDH-1 shuttles electrons from NADH, via FMN and iron-sulfur (Fe-S) centers, to quinones in the respiratory chain. The immediate electron acceptor for the enzyme in this species is believed to be ubiquinone. Couples the redox reaction to proton translocation (for every two electrons transferred, four hydrogen ions are translocated across the cytoplasmic membrane), and thus conserves the redox energy in a proton gradient. The protein is NADH-quinone oxidoreductase subunit I (nuoI) of Rhodobacter capsulatus (Rhodopseudomonas capsulata).